Reading from the N-terminus, the 267-residue chain is Rhomboid-type serine protease 2 (267 aa).

6 helical membrane passes run 20–40 (LPLFTRLIVLAIIALSIASLQ), 67–87 (FPLIHLNVIHAILNLLALTPL), 99–119 (TSLALFFGPLTSIPAVAYVLI), 126–146 (ANHGVLGASMWVFTLLAMESI), 155–179 (FVIGSVNIPTWTTPLIMSLVVAALI), and 185–206 (LGHLCGIAIGYVAGFGYAKLLA). The active-site Nucleophile is Ser134. Residue His187 is part of the active site. The segment at 247–267 (RPGPSGSAATELVGTTQRLGP) is disordered.

Belongs to the peptidase S54 family.

It localises to the golgi apparatus membrane. The protein localises to the golgi apparatus. It is found in the cis-Golgi network membrane. It catalyses the reaction Cleaves type-1 transmembrane domains using a catalytic dyad composed of serine and histidine that are contributed by different transmembrane domains.. Functionally, probable rhomboid-type serine protease that catalyzes intramembrane proteolysis. In Gibberella zeae (strain ATCC MYA-4620 / CBS 123657 / FGSC 9075 / NRRL 31084 / PH-1) (Wheat head blight fungus), this protein is Rhomboid-type serine protease 2 (RBD2).